Consider the following 607-residue polypeptide: Acyl-coenzyme A thioesterase 11 (607 aa).

The transit peptide at 1–13 (MIQNVGNHLRRGL) directs the protein to the mitochondrion. Residues Ser-15 and Ser-25 each carry the phosphoserine modification. Residues 43 to 155 (NPTEVQMSQL…LATFVARREI (113 aa)) enclose the HotDog ACOT-type 1 domain. Residues 91–93 (TAS), 120–122 (NSS), Arg-181, and 271–273 (HFR) each bind CoA. The region spanning 216–329 (EKTRVESVEL…FMTFVVLDAD (114 aa)) is the HotDog ACOT-type 2 domain. Residues 375-585 (LSVPWDPSNQ…GWNGKLAGGH (211 aa)) form the START domain.

Isoform 1 is predominantly expressed in skeletal muscle, liver, testis, stomach, spleen, lung and brain. Isoform 2 is predominantly expressed in kidney, uterus, hibernoma and white adipose tissue.

It is found in the mitochondrion matrix. The protein localises to the cytoplasm. It catalyses the reaction hexadecanoyl-CoA + H2O = hexadecanoate + CoA + H(+). It carries out the reaction tetradecanoyl-CoA + H2O = tetradecanoate + CoA + H(+). The catalysed reaction is dodecanoyl-CoA + H2O = dodecanoate + CoA + H(+). The enzyme catalyses butanoyl-CoA + H2O = butanoate + CoA + H(+). The protein operates within lipid metabolism; fatty acid metabolism. Functionally, has an acyl-CoA thioesterase activity with a preference for the long chain fatty acyl-CoA thioesters hexadecanoyl-CoA/palmitoyl-CoA and tetradecanoyl-CoA/myristoyl-CoA which are the main substrates in the mitochondrial beta-oxidation pathway. This Homo sapiens (Human) protein is Acyl-coenzyme A thioesterase 11 (ACOT11).